The primary structure comprises 237 residues: B3 domain-containing protein Os03g0184500 (237 aa).

A DNA-binding region (TF-B3) is located at residues 137 to 228; sequence FVKPMLHSHV…TFKVHIIRAT (92 aa).

The protein localises to the nucleus. This is B3 domain-containing protein Os03g0184500 from Oryza sativa subsp. japonica (Rice).